Reading from the N-terminus, the 307-residue chain is Aspartate carbamoyltransferase catalytic subunit (307 aa).

Carbamoyl phosphate-binding residues include R59 and T60. K87 contributes to the L-aspartate binding site. Residues R109, H137, and Q140 each coordinate carbamoyl phosphate. Residues R170 and R224 each contribute to the L-aspartate site. G265 and P266 together coordinate carbamoyl phosphate.

The protein belongs to the aspartate/ornithine carbamoyltransferase superfamily. ATCase family. In terms of assembly, heterododecamer (2C3:3R2) of six catalytic PyrB chains organized as two trimers (C3), and six regulatory PyrI chains organized as three dimers (R2).

The enzyme catalyses carbamoyl phosphate + L-aspartate = N-carbamoyl-L-aspartate + phosphate + H(+). Its pathway is pyrimidine metabolism; UMP biosynthesis via de novo pathway; (S)-dihydroorotate from bicarbonate: step 2/3. Its function is as follows. Catalyzes the condensation of carbamoyl phosphate and aspartate to form carbamoyl aspartate and inorganic phosphate, the committed step in the de novo pyrimidine nucleotide biosynthesis pathway. This chain is Aspartate carbamoyltransferase catalytic subunit, found in Cytophaga hutchinsonii (strain ATCC 33406 / DSM 1761 / CIP 103989 / NBRC 15051 / NCIMB 9469 / D465).